We begin with the raw amino-acid sequence, 251 residues long: Auxin-responsive protein IAA29 (251 aa).

Positions Leu-3 to Leu-7 match the EAR-like (transcriptional repression) motif. The PB1 domain maps to Ser-159–Tyr-246.

The protein belongs to the Aux/IAA family. As to quaternary structure, homodimers and heterodimers.

It localises to the nucleus. In terms of biological role, aux/IAA proteins are short-lived transcriptional factors that function as repressors of early auxin response genes at low auxin concentrations. Repression is thought to result from the interaction with auxin response factors (ARFs), proteins that bind to the auxin-responsive promoter element (AuxRE). Formation of heterodimers with ARF proteins may alter their ability to modulate early auxin response genes expression. This Arabidopsis thaliana (Mouse-ear cress) protein is Auxin-responsive protein IAA29 (IAA29).